The chain runs to 392 residues: uncharacterized protein (392 aa).

An N-terminal signal peptide occupies residues M1–A23. Over E24 to K342 the chain is Extracellular. An N-linked (GlcNAc...) asparagine glycan is attached at N77. Disordered regions lie at residues A83–A154 and A167–C320. Low complexity predominate over residues T86–T97. Polar residues-rich tracts occupy residues S107–T127 and T170–T249. The N-linked (GlcNAc...) asparagine glycan is linked to N172. Composition is skewed to low complexity over residues S265 to Q277 and T284 to S309. A helical transmembrane segment spans residues M343 to F363. Over A364–M392 the chain is Cytoplasmic.

It localises to the cell membrane. The protein localises to the golgi apparatus. The protein resides in the trans-Golgi network membrane. This is an uncharacterized protein from Mus musculus (Mouse).